The chain runs to 91 residues: Small ribosomal subunit protein bS16 (91 aa).

The protein belongs to the bacterial ribosomal protein bS16 family.

This chain is Small ribosomal subunit protein bS16, found in Limosilactobacillus reuteri (strain DSM 20016) (Lactobacillus reuteri).